A 156-amino-acid chain; its full sequence is Small ribosomal subunit protein uS7 (156 aa).

This sequence belongs to the universal ribosomal protein uS7 family. As to quaternary structure, part of the 30S ribosomal subunit. Contacts proteins S9 and S11.

In terms of biological role, one of the primary rRNA binding proteins, it binds directly to 16S rRNA where it nucleates assembly of the head domain of the 30S subunit. Is located at the subunit interface close to the decoding center, probably blocks exit of the E-site tRNA. The polypeptide is Small ribosomal subunit protein uS7 (Streptococcus thermophilus (strain CNRZ 1066)).